The chain runs to 328 residues: Flap endonuclease 1 (328 aa).

The N-domain stretch occupies residues 1–98; it reads MGVKLRDVVS…ETVSRRADIR (98 aa). Asp-27, Asp-80, Glu-152, Glu-154, Asp-173, Asp-175, and Asp-226 together coordinate Mg(2+). Residues 116 to 247 form an I-domain region; that stretch reads RAKKYAVRSS…RGLKLIREKG (132 aa). The tract at residues 320–328 is interaction with PCNA; it reads TQKSLEDWF.

This sequence belongs to the XPG/RAD2 endonuclease family. FEN1 subfamily. In terms of assembly, interacts with PCNA. PCNA stimulates the nuclease activity without altering cleavage specificity. The cofactor is Mg(2+).

Its function is as follows. Structure-specific nuclease with 5'-flap endonuclease and 5'-3' exonuclease activities involved in DNA replication and repair. During DNA replication, cleaves the 5'-overhanging flap structure that is generated by displacement synthesis when DNA polymerase encounters the 5'-end of a downstream Okazaki fragment. Binds the unpaired 3'-DNA end and kinks the DNA to facilitate 5' cleavage specificity. Cleaves one nucleotide into the double-stranded DNA from the junction in flap DNA, leaving a nick for ligation. Also involved in the base excision repair (BER) pathway. Acts as a genome stabilization factor that prevents flaps from equilibrating into structures that lead to duplications and deletions. Also possesses 5'-3' exonuclease activity on nicked or gapped double-stranded DNA. The sequence is that of Flap endonuclease 1 from Methanothermobacter thermautotrophicus (strain ATCC 29096 / DSM 1053 / JCM 10044 / NBRC 100330 / Delta H) (Methanobacterium thermoautotrophicum).